The sequence spans 545 residues: Membrane protein insertase YidC (545 aa).

A helical membrane pass occupies residues 6 to 26 (FVLFVFFIFLSFLLWEQWQID). The segment at 32-69 (QAVAQTDGASRPAGDLPQRPSDDESDVTVHTEAPTQEG) is disordered. 4 helical membrane passes run 354-374 (FFNNWGWAIIFVTLVIKALFF), 425-445 (GGCLPILVQIPVFISLYWVLV), 462-482 (LSSKDPYFVLPLIMGVSMFIQ), and 500-520 (FFPLVFTVFFLFFPSGLVLYW).

Belongs to the OXA1/ALB3/YidC family. Type 1 subfamily. In terms of assembly, interacts with the Sec translocase complex via SecD. Specifically interacts with transmembrane segments of nascent integral membrane proteins during membrane integration.

It localises to the cell inner membrane. Required for the insertion and/or proper folding and/or complex formation of integral membrane proteins into the membrane. Involved in integration of membrane proteins that insert both dependently and independently of the Sec translocase complex, as well as at least some lipoproteins. Aids folding of multispanning membrane proteins. The sequence is that of Membrane protein insertase YidC from Methylococcus capsulatus (strain ATCC 33009 / NCIMB 11132 / Bath).